The following is a 192-amino-acid chain: Acetolactate synthase small subunit (192 aa).

Residues 29–103 enclose the ACT domain; sequence IITVKVRNEM…DTLKVSDLTD (75 aa).

The protein belongs to the acetolactate synthase small subunit family. In terms of assembly, dimer of large and small chains.

It carries out the reaction 2 pyruvate + H(+) = (2S)-2-acetolactate + CO2. It functions in the pathway amino-acid biosynthesis; L-isoleucine biosynthesis; L-isoleucine from 2-oxobutanoate: step 1/4. Its pathway is amino-acid biosynthesis; L-valine biosynthesis; L-valine from pyruvate: step 1/4. The polypeptide is Acetolactate synthase small subunit (ilvH) (Aquifex aeolicus (strain VF5)).